The sequence spans 313 residues: Dioxygenase swnH2 (313 aa).

His155, Asp157, and His232 together coordinate Fe cation.

This sequence belongs to the PhyH family. Homodimer. Fe cation serves as cofactor.

The protein operates within mycotoxin biosynthesis. In terms of biological role, aminotransferase; part of the gene cluster that mediates the biosynthesis of swainsonine (SW), a cytotoxic fungal alkaloid and a potential cancer therapy drug. Swainsonine production occurs via a multibranched pathway and is dispensable for fungal colonization of plants and infection of insect hosts. The first step of swainsonine biosynthesis is the production of the precursor pipecolic acid (PA) via conversion of L-lysine (Lys) to 1-piperideine-6-carboxylate (P6C) by the aminotransferase swnA, the latter being further reduced to PA by the reductase swnR. The PKS-NRPS hybrid synthetase swnK uptakes and condensates PA and malonyl-CoA with and without skipping of the ketoreductase (KR) domain in order to produce 3 intermediates, 1-oxoindolizidine, (1S)-1-hydroxyindolizin, and (1R)-1-hydroxyindolizine; with the transisomer (1S)-1-hydroxyindolizin being predominant. The terminal thioester reductase (TE) domain of swnK is involved in reduction of the thioester bond to release the intermediate aldehydes. The oxidoreductase swnN could contribute to the reduction of 1-oxoindolizidine to (1S)-1-hydroxyindolizin and (1R)-1-hydroxyindolizine, contributing to the major route of SW production. The dioxygenase swnH2 would be responsible for the oxidization of (1R)-1-hydroxyindolizine into (1R,2S)-1,2-dihydroxyindolizine and of (1S)-1-hydroxyindolizin to yield both (1R,2S)-1,2-dihydroxyindolizine and (1S,2S)-1,2-dihydroxyindolizine. The dioxygenase swnH1 then performs the conversion of the 1,2-dihydroxyindolizine epimers to SW. In Arthroderma benhamiae (strain ATCC MYA-4681 / CBS 112371) (Trichophyton mentagrophytes), this protein is Dioxygenase swnH2.